We begin with the raw amino-acid sequence, 594 residues long: Potassium-transporting ATPase potassium-binding subunit (594 aa).

The next 10 helical transmembrane spans lie at 3 to 23 (ADFL…APLL), 67 to 87 (AVAM…LQRL), 136 to 156 (ALTV…IALV), 179 to 199 (LYVL…QGVV), 287 to 307 (LEML…GEMV), 314 to 334 (VAIL…AAYF), 415 to 435 (GLYG…LMIG), 453 to 473 (VALV…VAVL), 519 to 539 (VLLG…ILAL), and 562 to 582 (LFVA…YVPA).

It belongs to the KdpA family. The system is composed of three essential subunits: KdpA, KdpB and KdpC.

It is found in the cell inner membrane. Functionally, part of the high-affinity ATP-driven potassium transport (or Kdp) system, which catalyzes the hydrolysis of ATP coupled with the electrogenic transport of potassium into the cytoplasm. This subunit binds the periplasmic potassium ions and delivers the ions to the membrane domain of KdpB through an intramembrane tunnel. The chain is Potassium-transporting ATPase potassium-binding subunit from Bordetella pertussis (strain Tohama I / ATCC BAA-589 / NCTC 13251).